The following is a 361-amino-acid chain: Chorismate synthase (361 aa).

2 residues coordinate NADP(+): Arg48 and Arg54. Residues 125 to 127 (RSS), 238 to 239 (NA), Gly278, 293 to 297 (KPTSS), and Arg319 contribute to the FMN site.

It belongs to the chorismate synthase family. In terms of assembly, homotetramer. FMNH2 serves as cofactor.

It catalyses the reaction 5-O-(1-carboxyvinyl)-3-phosphoshikimate = chorismate + phosphate. It functions in the pathway metabolic intermediate biosynthesis; chorismate biosynthesis; chorismate from D-erythrose 4-phosphate and phosphoenolpyruvate: step 7/7. In terms of biological role, catalyzes the anti-1,4-elimination of the C-3 phosphate and the C-6 proR hydrogen from 5-enolpyruvylshikimate-3-phosphate (EPSP) to yield chorismate, which is the branch point compound that serves as the starting substrate for the three terminal pathways of aromatic amino acid biosynthesis. This reaction introduces a second double bond into the aromatic ring system. This Escherichia coli O157:H7 protein is Chorismate synthase.